A 120-amino-acid polypeptide reads, in one-letter code: Fumarate reductase subunit D (120 aa).

The next 3 helical transmembrane spans lie at 25-45 (FAML…LGIL), 57-77 (GFVT…LPMW), and 100-120 (IACY…VFMI).

Belongs to the FrdD family. Part of an enzyme complex containing four subunits: a flavoprotein (FrdA), an iron-sulfur protein (FrdB), and two hydrophobic anchor proteins (FrdC and FrdD).

It is found in the cell inner membrane. In terms of biological role, anchors the catalytic components of the fumarate reductase complex to the cell membrane, binds quinones. The polypeptide is Fumarate reductase subunit D (Photobacterium profundum (strain SS9)).